The following is a 263-amino-acid chain: uncharacterized protein (263 aa).

31 to 38 contacts ATP; sequence GPTGSGKT.

Belongs to the CbbQ/NirQ/NorQ/GpvN family.

This is an uncharacterized protein from Staphylococcus aureus (strain bovine RF122 / ET3-1).